Reading from the N-terminus, the 148-residue chain is MEKTFLMVKPDGVQRAFIGEIVARFEKKGFQLVGAKLMQVTPEIAGQHYAEHTEKPFFGELVDFITSGPVFAMVWQGEGVVDTARNMMGKTRPHEAAPGTIRGDFGVTVAKNIIHGSDSLESAEREIGIFFKEEELVDYSKLMNEWIY.

Residues K9, F57, R85, T91, R102, and N112 each contribute to the ATP site. Phosphothreonine is present on T91. Residue H115 is the Pros-phosphohistidine intermediate of the active site. S122 is subject to Phosphoserine.

This sequence belongs to the NDK family. In terms of assembly, homotetramer. It depends on Mg(2+) as a cofactor.

The protein resides in the cytoplasm. The enzyme catalyses a 2'-deoxyribonucleoside 5'-diphosphate + ATP = a 2'-deoxyribonucleoside 5'-triphosphate + ADP. It catalyses the reaction a ribonucleoside 5'-diphosphate + ATP = a ribonucleoside 5'-triphosphate + ADP. Its function is as follows. Major role in the synthesis of nucleoside triphosphates other than ATP. The ATP gamma phosphate is transferred to the NDP beta phosphate via a ping-pong mechanism, using a phosphorylated active-site intermediate. This is Nucleoside diphosphate kinase from Bacillus anthracis.